Here is a 321-residue protein sequence, read N- to C-terminus: Meiotic drive suppressor wtf26 (321 aa).

Residues 29–68 (GLLPEYNSEEEGALPTYSDHARSSNPPNTHRENHSSGTTD) are disordered. 6 helical membrane-spanning segments follow: residues 73 to 93 (FLIK…LAVC), 110 to 130 (WTLF…LTYF), 151 to 171 (EMMI…FGCV), 188 to 208 (TISA…WTLW), 210 to 230 (ALSG…LVNG), and 243 to 263 (GYEI…LYEM).

The protein belongs to the WTF family. In terms of assembly, homomer. Interacts with other proteins that exhibit high sequence similarity.

It is found in the spore membrane. Its subcellular location is the vacuole membrane. Functionally, acts as a suppressor component of the dual wtf meiotic drive system, and can suppress but not confer meiotic drive by compatible poisons. Wtf meiotic drive systems promote unequal transmission of alleles from the parental zygote to progeny spores by encoding a poison and an antidote from the same locus; the poison is trans-acting and forms toxic aggregates in all spores within an ascus, wherease the antidote is spore-specific and targets aggregates for degradation by the vacuole. Meiotic drive by wtf systems therefore lead to poisoning of all progeny that do not inherit the dual poison/antidote allele, or express a compatible antidote. The sequence is that of Meiotic drive suppressor wtf26 from Schizosaccharomyces kambucha (Fission yeast).